A 334-amino-acid chain; its full sequence is Holliday junction branch migration complex subunit RuvB (334 aa).

The tract at residues 1–182 (MDERLVSSEA…FGVLSRLEYY (182 aa)) is large ATPase domain (RuvB-L). ATP-binding positions include Leu-21, Arg-22, Gly-63, Lys-66, Thr-67, Thr-68, 129–131 (EDF), Arg-172, Tyr-182, and Arg-219. Thr-67 lines the Mg(2+) pocket. Positions 183-253 (TQEELTDIVS…IAHDALERLQ (71 aa)) are small ATPAse domain (RuvB-S). Residues 256 to 334 (ALGLDHIDHK…HFRLEAPARD (79 aa)) form a head domain (RuvB-H) region. Arg-311 and Arg-316 together coordinate DNA.

The protein belongs to the RuvB family. As to quaternary structure, homohexamer. Forms an RuvA(8)-RuvB(12)-Holliday junction (HJ) complex. HJ DNA is sandwiched between 2 RuvA tetramers; dsDNA enters through RuvA and exits via RuvB. An RuvB hexamer assembles on each DNA strand where it exits the tetramer. Each RuvB hexamer is contacted by two RuvA subunits (via domain III) on 2 adjacent RuvB subunits; this complex drives branch migration. In the full resolvosome a probable DNA-RuvA(4)-RuvB(12)-RuvC(2) complex forms which resolves the HJ.

The protein resides in the cytoplasm. It carries out the reaction ATP + H2O = ADP + phosphate + H(+). The RuvA-RuvB-RuvC complex processes Holliday junction (HJ) DNA during genetic recombination and DNA repair, while the RuvA-RuvB complex plays an important role in the rescue of blocked DNA replication forks via replication fork reversal (RFR). RuvA specifically binds to HJ cruciform DNA, conferring on it an open structure. The RuvB hexamer acts as an ATP-dependent pump, pulling dsDNA into and through the RuvAB complex. RuvB forms 2 homohexamers on either side of HJ DNA bound by 1 or 2 RuvA tetramers; 4 subunits per hexamer contact DNA at a time. Coordinated motions by a converter formed by DNA-disengaged RuvB subunits stimulates ATP hydrolysis and nucleotide exchange. Immobilization of the converter enables RuvB to convert the ATP-contained energy into a lever motion, pulling 2 nucleotides of DNA out of the RuvA tetramer per ATP hydrolyzed, thus driving DNA branch migration. The RuvB motors rotate together with the DNA substrate, which together with the progressing nucleotide cycle form the mechanistic basis for DNA recombination by continuous HJ branch migration. Branch migration allows RuvC to scan DNA until it finds its consensus sequence, where it cleaves and resolves cruciform DNA. This is Holliday junction branch migration complex subunit RuvB from Bacillus velezensis (strain DSM 23117 / BGSC 10A6 / LMG 26770 / FZB42) (Bacillus amyloliquefaciens subsp. plantarum).